The sequence spans 119 residues: MSNIDKLNDHELVDLKRDIERELKRRAEGPKITTYYVVSCITDAQHFTDMDCALRCLKRVTEDLMEWVAESPENRDYVNRCTGIVGAKLQVEEMNLDHFNMCVAEKYFDDICYPPETAQ.

This Salmonella typhimurium (Bacteriophage P22) protein is Eaf protein (eaf).